We begin with the raw amino-acid sequence, 548 residues long: T-complex protein 1 subunit theta (548 aa).

The residue at position 2 (A2) is an N-acetylalanine. Position 23 is a phosphoserine (S23). Y30 is modified (phosphotyrosine). Y47 and G48 together coordinate ADP. D99 is a Mg(2+) binding site. Residues G100, T101, N102, and F103 each contribute to the ADP site. ATP is bound by residues G100, T101, and N102. S162 is modified (phosphoserine). Residues M169, S170, and K171 each coordinate ADP. Residues S170 and K171 each contribute to the ATP site. Glycyl lysine isopeptide (Lys-Gly) (interchain with G-Cter in SUMO2) cross-links involve residues K224, K254, and K260. Phosphoserine is present on residues S269 and S317. Residues K318 and K400 each carry the N6-acetyllysine modification. Position 412 (G412) interacts with ADP. Position 412 (G412) interacts with ATP. K459 is covalently cross-linked (Glycyl lysine isopeptide (Lys-Gly) (interchain with G-Cter in SUMO1)). K466 carries the post-translational modification N6-acetyllysine. D499 is an ADP binding site. 2 residues coordinate ATP: D499 and K504. At Y505 the chain carries Phosphotyrosine. A disordered region spans residues 529 to 548 (PAGGPKPPSGKKDWDDDQND). A Glycyl lysine isopeptide (Lys-Gly) (interchain with G-Cter in SUMO2) cross-link involves residue K534. S537 bears the Phosphoserine mark. Residue K539 forms a Glycyl lysine isopeptide (Lys-Gly) (interchain with G-Cter in SUMO2) linkage.

The protein belongs to the TCP-1 chaperonin family. As to quaternary structure, component of the chaperonin-containing T-complex (TRiC), a hexadecamer composed of two identical back-to-back stacked rings enclosing a protein folding chamber. Each ring is made up of eight different subunits: TCP1/CCT1, CCT2, CCT3, CCT4, CCT5, CCT6A/CCT6, CCT7, CCT8. Interacts with PACRG. Interacts with DNAAF4. Interacts with synaptic plasticity regulator PANTS.

The protein localises to the cytoplasm. The protein resides in the cytoskeleton. It localises to the microtubule organizing center. Its subcellular location is the centrosome. It is found in the cilium basal body. It catalyses the reaction ATP + H2O = ADP + phosphate + H(+). Functionally, component of the chaperonin-containing T-complex (TRiC), a molecular chaperone complex that assists the folding of actin, tubulin and other proteins upon ATP hydrolysis. The TRiC complex mediates the folding of WRAP53/TCAB1, thereby regulating telomere maintenance. As part of the TRiC complex may play a role in the assembly of BBSome, a complex involved in ciliogenesis regulating transports vesicles to the cilia. In Mus musculus (Mouse), this protein is T-complex protein 1 subunit theta (Cct8).